Consider the following 461-residue polypeptide: Argininosuccinate lyase (461 aa).

It belongs to the lyase 1 family. Argininosuccinate lyase subfamily.

Its subcellular location is the cytoplasm. The enzyme catalyses 2-(N(omega)-L-arginino)succinate = fumarate + L-arginine. Its pathway is amino-acid biosynthesis; L-arginine biosynthesis; L-arginine from L-ornithine and carbamoyl phosphate: step 3/3. Strongly inhibited by L-arginine. Inhibitory effects are lowered at pH 7.0 compared to those at pH 8.0. At 45 degrees Celsius and pH 8.0, activity decreases to 94%, 74% and 37% in the presence of 0.6 mM, 2.8 mM and 10 mM arginine, respectively. Activity also decreases to 86% in the presence of 10 mM sodium succinate or sodium citrate. Activity does not decrease in the presence of 1 mM or 10 mM L-lysine, which has a similar structure to arginine. Its function is as follows. Catalyzes the last step of arginine biosynthesis, the conversion of argininosuccinate into L-arginine and fumarate. The polypeptide is Argininosuccinate lyase (Synechocystis sp. (strain ATCC 27184 / PCC 6803 / Kazusa)).